The sequence spans 66 residues: Large ribosomal subunit protein uL29 (66 aa).

Belongs to the universal ribosomal protein uL29 family.

The protein is Large ribosomal subunit protein uL29 of Helicobacter pylori (strain HPAG1).